A 56-amino-acid polypeptide reads, in one-letter code: Conotoxin Bu12 (56 aa).

An N-terminal signal peptide occupies residues 1 to 2; it reads TA. The propeptide occupies 3 to 25; sequence EDSRGTQLHRALRKATKLPVSTR. Intrachain disulfides connect Cys-26-Cys-40, Cys-33-Cys-44, and Cys-39-Cys-49.

The protein belongs to the conotoxin O1 superfamily. In terms of tissue distribution, expressed by the venom duct.

The protein localises to the secreted. The protein is Conotoxin Bu12 of Conus bullatus (Bubble cone).